The sequence spans 438 residues: MTPITPIEAPLPKGVTDFLPEKADKIGYIEGKIRKVFELWGFRRIITPLLEFEDVIAAGLGDDLKAKTFRFDDRQSGKLIAVPSDITPQIARIVATRLRGYPLPHRICYSGRVLRHAELQSGRSREIFQSGVELIGLDSPEADAEMVTMAVEALKGLGFRDFKIDLGHVGFIRGIMTASGLEVAVRNRLQEAIGKKDVSAVRSILAESPLSDAAKDELAALPRLFGGREVLDEAGRVATNDTSRRALDNISQVLDLLDIHGVSDHLTIDLGEVRGLDYHTGLTFEGFVTGMGEAVCSGGRYDTLTARYGFPAPATGFTFNVLALLSALEKRPDVEASKTRDILIFNQQDDRREALEIAQQLRRRGYTTARDIIRRNFDDSLDYARRMNILHMMVVGGDQCGPDEVYLVRVADGQGQRIKKAEVFSERFSLDAGPDKES.

It belongs to the class-II aminoacyl-tRNA synthetase family. HisZ subfamily. As to quaternary structure, heteromultimer composed of HisG and HisZ subunits.

It is found in the cytoplasm. The protein operates within amino-acid biosynthesis; L-histidine biosynthesis; L-histidine from 5-phospho-alpha-D-ribose 1-diphosphate: step 1/9. Its function is as follows. Required for the first step of histidine biosynthesis. May allow the feedback regulation of ATP phosphoribosyltransferase activity by histidine. This Geobacter sulfurreducens (strain ATCC 51573 / DSM 12127 / PCA) protein is ATP phosphoribosyltransferase regulatory subunit.